The primary structure comprises 326 residues: MDLTGLLITIVVAFLITVLLSPIFIPFLRRLNFGQSIREEGPQSHQKKTGTPTMGGLMIIFSIIITSLIMASRTDEGINYQVWLLIFVLFGYGLLGFLDDFIKVAMKRNLGLTSKQKLFGQIIIALVFYFILRNQGFSTVIYVPGTELQFDIGWFYAVLVIFMMVGASNAVNLTDGLDGLLAGTAAIAFGAFAIIAWYGIPDHVVAVFSLAVVGALLGFLVFNAHPAKVFMGDTGSLALGGAIAAISILLKLEILLIIIGGVFVIETLSVIIQVISFKTTGKRVFKMSPLHHHYELLGWSEWRVVTTFWLVGLLFAMLGVYIEVGM.

The next 10 helical transmembrane spans lie at 5-25 (GLLITIVVAFLITVLLSPIFI), 51-71 (TPTMGGLMIIFSIIITSLIMA), 82-102 (VWLLIFVLFGYGLLGFLDDFI), 122-142 (IIIALVFYFILRNQGFSTVIY), 148-168 (LQFDIGWFYAVLVIFMMVGAS), 180-200 (LLAGTAAIAFGAFAIIAWYGI), 204-224 (VVAVFSLAVVGALLGFLVFNA), 229-249 (VFMGDTGSLALGGAIAAISIL), 252-272 (LEILLIIIGGVFVIETLSVII), and 304-324 (VVTTFWLVGLLFAMLGVYIEV).

It belongs to the glycosyltransferase 4 family. MraY subfamily. Requires Mg(2+) as cofactor.

The protein resides in the cell membrane. The catalysed reaction is UDP-N-acetyl-alpha-D-muramoyl-L-alanyl-gamma-D-glutamyl-meso-2,6-diaminopimeloyl-D-alanyl-D-alanine + di-trans,octa-cis-undecaprenyl phosphate = di-trans,octa-cis-undecaprenyl diphospho-N-acetyl-alpha-D-muramoyl-L-alanyl-D-glutamyl-meso-2,6-diaminopimeloyl-D-alanyl-D-alanine + UMP. Its pathway is cell wall biogenesis; peptidoglycan biosynthesis. Catalyzes the initial step of the lipid cycle reactions in the biosynthesis of the cell wall peptidoglycan: transfers peptidoglycan precursor phospho-MurNAc-pentapeptide from UDP-MurNAc-pentapeptide onto the lipid carrier undecaprenyl phosphate, yielding undecaprenyl-pyrophosphoryl-MurNAc-pentapeptide, known as lipid I. The chain is Phospho-N-acetylmuramoyl-pentapeptide-transferase from Oceanobacillus iheyensis (strain DSM 14371 / CIP 107618 / JCM 11309 / KCTC 3954 / HTE831).